The chain runs to 245 residues: Probable histone chaperone asf-1-like protein (245 aa).

Positions 157–166 (EDPVAEPVDE) are enriched in acidic residues. A disordered region spans residues 157–245 (EDPVAEPVDE…SGDVEMGDKH (89 aa)). A compositionally biased stretch (basic and acidic residues) spans 167–183 (EANKVFDEDDLMPLHDD). The segment covering 184–206 (GQDDDEEEEDDDETGPNTEEVDL) has biased composition (acidic residues). Over residues 215 to 245 (ANAHDGTEQKNGEESMEHDGASGDVEMGDKH) the composition is skewed to basic and acidic residues.

It belongs to the ASF1 family. Interacts with histone H3 and histone H4.

The protein resides in the nucleus. Its function is as follows. Histone chaperone that facilitates histone deposition and histone exchange and removal during nucleosome assembly and disassembly. This Caenorhabditis elegans protein is Probable histone chaperone asf-1-like protein (asfl-1).